The sequence spans 82 residues: UPF0291 protein LVIS_1359 (82 aa).

The protein belongs to the UPF0291 family.

It localises to the cytoplasm. The sequence is that of UPF0291 protein LVIS_1359 from Levilactobacillus brevis (strain ATCC 367 / BCRC 12310 / CIP 105137 / JCM 1170 / LMG 11437 / NCIMB 947 / NCTC 947) (Lactobacillus brevis).